We begin with the raw amino-acid sequence, 337 residues long: Lipoyl synthase (337 aa).

Cys-81, Cys-86, Cys-92, Cys-107, Cys-111, Cys-114, and Ser-323 together coordinate [4Fe-4S] cluster. A Radical SAM core domain is found at 93–312 (FSHGTATFMI…EDYGNALGFS (220 aa)).

This sequence belongs to the radical SAM superfamily. Lipoyl synthase family. [4Fe-4S] cluster serves as cofactor.

The protein resides in the cytoplasm. It catalyses the reaction [[Fe-S] cluster scaffold protein carrying a second [4Fe-4S](2+) cluster] + N(6)-octanoyl-L-lysyl-[protein] + 2 oxidized [2Fe-2S]-[ferredoxin] + 2 S-adenosyl-L-methionine + 4 H(+) = [[Fe-S] cluster scaffold protein] + N(6)-[(R)-dihydrolipoyl]-L-lysyl-[protein] + 4 Fe(3+) + 2 hydrogen sulfide + 2 5'-deoxyadenosine + 2 L-methionine + 2 reduced [2Fe-2S]-[ferredoxin]. It functions in the pathway protein modification; protein lipoylation via endogenous pathway; protein N(6)-(lipoyl)lysine from octanoyl-[acyl-carrier-protein]: step 2/2. Its function is as follows. Catalyzes the radical-mediated insertion of two sulfur atoms into the C-6 and C-8 positions of the octanoyl moiety bound to the lipoyl domains of lipoate-dependent enzymes, thereby converting the octanoylated domains into lipoylated derivatives. The chain is Lipoyl synthase from Xanthomonas campestris pv. campestris (strain B100).